The following is a 23-amino-acid chain: Unknown protein NF016 from 2D-PAGE (23 aa).

The polypeptide is Unknown protein NF016 from 2D-PAGE (Naegleria fowleri (Brain eating amoeba)).